Consider the following 117-residue polypeptide: UPF0102 protein Ssed_4252 (117 aa).

It belongs to the UPF0102 family.

The chain is UPF0102 protein Ssed_4252 from Shewanella sediminis (strain HAW-EB3).